A 1111-amino-acid polypeptide reads, in one-letter code: Phytochrome C (1111 aa).

The region spanning 213 to 393 (NMLLLCDALV…VFGVQINKEA (181 aa)) is the GAF domain. Cys-318 contributes to the phytochromobilin binding site. 2 consecutive PAS domains span residues 604 to 674 (IVNE…LEGS) and 737 to 808 (DYAR…TKLR). Positions 889–1111 (YLRHEVKDPE…FVILTEFPLI (223 aa)) constitute a Histidine kinase domain.

Belongs to the phytochrome family. As to quaternary structure, homodimer. Contains one covalently linked phytochromobilin chromophore.

Regulatory photoreceptor which exists in two forms that are reversibly interconvertible by light: the Pr form that absorbs maximally in the red region of the spectrum and the Pfr form that absorbs maximally in the far-red region. Photoconversion of Pr to Pfr induces an array of morphogenic responses, whereas reconversion of Pfr to Pr cancels the induction of those responses. Pfr controls the expression of a number of nuclear genes including those encoding the small subunit of ribulose-bisphosphate carboxylase, chlorophyll A/B binding protein, protochlorophyllide reductase, rRNA, etc. It also controls the expression of its own gene(s) in a negative feedback fashion. The chain is Phytochrome C (PHYC) from Arabidopsis thaliana (Mouse-ear cress).